The chain runs to 1385 residues: Contactin-associated protein 1 (1385 aa).

The signal sequence occupies residues 1-20; sequence MMSLRLFSILLATVVSGAWG. The Extracellular portion of the chain corresponds to 21-1284; that stretch reads WGYYGCNEEL…PYYHDDGWIA (1264 aa). The F5/8 type C domain occupies 26-169; sequence CNEELVGPLY…IGLRLGIYGC (144 aa). The cysteines at positions 26 and 169 are disulfide-linked. N-linked (GlcNAc...) asparagine glycans are attached at residues asparagine 121, asparagine 129, and asparagine 277. Laminin G-like domains are found at residues 204 to 356 and 390 to 539; these read FKTE…AFRC and FRTW…FDTC. Cysteine 324 and cysteine 356 are disulfide-bonded. 3 N-linked (GlcNAc...) asparagine glycosylation sites follow: asparagine 421, asparagine 500, and asparagine 519. 4 disulfides stabilise this stretch: cysteine 507–cysteine 539, cysteine 545–cysteine 556, cysteine 550–cysteine 565, and cysteine 567–cysteine 577. The region spanning 545–577 is the EGF-like 1 domain; it reads CSPNMCEHDGRCYQSWDDFICYCELTGYKGVTC. The 220-residue stretch at 577–796 folds into the Fibrinogen C-terminal domain; that stretch reads CHEPLYKESC…NTISFHTGAA (220 aa). N-linked (GlcNAc...) asparagine glycosylation is found at asparagine 598, asparagine 654, asparagine 665, asparagine 764, asparagine 805, asparagine 844, asparagine 861, asparagine 949, and asparagine 957. One can recognise a Laminin G-like 3 domain in the interval 814–958; it reads FRTSAPSGVF…NASEGTFPNC (145 aa). Intrachain disulfides connect cysteine 931–cysteine 958, cysteine 962–cysteine 975, cysteine 969–cysteine 984, and cysteine 986–cysteine 996. An EGF-like 2 domain is found at 962–996; sequence CTHPRFPCFHGGRCVERYSYYTCDCDLTAFDGPYC. 2 N-linked (GlcNAc...) asparagine glycosylation sites follow: asparagine 1079 and asparagine 1148. The Laminin G-like 4 domain occupies 1089–1251; the sequence is FSTNSAPAVL…VQGELSESNC (163 aa). A disulfide bond links cysteine 1210 and cysteine 1251. A helical transmembrane segment spans residues 1285–1305; the sequence is ILLGFLVAFLLLGLVGMLVLF. Topologically, residues 1306 to 1385 are cytoplasmic; that stretch reads YLQNHRYKGS…PQILEESRSE (80 aa). Residues 1317–1385 form a disordered region; sequence HTNEPKATHD…PQILEESRSE (69 aa). Positions 1319 to 1329 are enriched in basic and acidic residues; it reads NEPKATHDSHP. Residues 1334–1367 are compositionally biased toward pro residues; that stretch reads PLPPSGPAQAPAPTPAPTQLPTPAPAPAPAPASG. The SH3-binding motif lies at 1334–1370; it reads PLPPSGPAQAPAPTPAPTQLPTPAPAPAPAPASGPGP. The residue at position 1384 (serine 1384) is a Phosphoserine.

The protein belongs to the neurexin family. In terms of assembly, interacts with CNTN1/contactin in cis form. Expressed in brain. In myelinated nerve fibers predominantly found in paranodal axoglial junctions. In the internodal region of myelinated axons in the CNS and the PNS also found as a thin line apposing the inner mesaxon of the myelin sheath. In PNS neurons this line forms a circumferential ring that apposes the innermost aspect of Schmidt-Lanterman incisures.

It localises to the membrane. Its subcellular location is the cell junction. The protein resides in the paranodal septate junction. Its function is as follows. Required, with CNTNAP2, for radial and longitudinal organization of myelinated axons. Plays a role in the formation of functional distinct domains critical for saltatory conduction of nerve impulses in myelinated nerve fibers. Demarcates the paranodal region of the axo-glial junction. In association with contactin involved in the signaling between axons and myelinating glial cells. The protein is Contactin-associated protein 1 (Cntnap1) of Mus musculus (Mouse).